The sequence spans 669 residues: Glycine--tRNA ligase beta subunit (669 aa).

This sequence belongs to the class-II aminoacyl-tRNA synthetase family. Tetramer of two alpha and two beta subunits.

It is found in the cytoplasm. The catalysed reaction is tRNA(Gly) + glycine + ATP = glycyl-tRNA(Gly) + AMP + diphosphate. The chain is Glycine--tRNA ligase beta subunit from Phenylobacterium zucineum (strain HLK1).